The sequence spans 265 residues: TATA-box-binding protein (265 aa).

The interval 1-40 is disordered; it reads MYNPSQAVPVSLHKNQDNQDGGQQRSHYPQISSQQSQSYL. Over residues 18 to 29 the composition is skewed to polar residues; the sequence is NQDGGQQRSHYP. 2 consecutive repeat copies span residues 91–167 and 181–258.

Belongs to the TBP family. Belongs to the TFIID complex together with the TBP-associated factors (TAFs). Binds DNA as monomer.

It is found in the nucleus. Its function is as follows. General transcription factor that functions at the core of the DNA-binding multiprotein factor TFIID. Binding of TFIID to the TATA box is the initial transcriptional step of the pre-initiation complex (PIC), playing a role in the activation of eukaryotic genes transcribed by RNA polymerase II. The chain is TATA-box-binding protein from Strongylocentrotus purpuratus (Purple sea urchin).